The chain runs to 96 residues: MIHKLTSEERATQIAALHGWQAATGRDAIQRQFKFADFNEAFGFMTRVAIKAQEMDHHPEWFNVYDKVEITLSTHEANGVTERDIRLAAFIDSITA.

Belongs to the pterin-4-alpha-carbinolamine dehydratase family.

The enzyme catalyses (4aS,6R)-4a-hydroxy-L-erythro-5,6,7,8-tetrahydrobiopterin = (6R)-L-erythro-6,7-dihydrobiopterin + H2O. The polypeptide is Putative pterin-4-alpha-carbinolamine dehydratase (Paraburkholderia xenovorans (strain LB400)).